The sequence spans 682 residues: RNA helicase NPH-II (682 aa).

A Helicase ATP-binding domain is found at 181–354 (FELLRKRKQI…EFLPDVEFYH (174 aa)). 194 to 201 (GSTGIGKT) serves as a coordination point for ATP. Residues 303-306 (DEIH) carry the DEXH box motif. The region spanning 386 to 551 (NISTTLNWCR…KFKLSLPNDL (166 aa)) is the Helicase C-terminal domain.

Belongs to the DEAD box helicase family. DEAH subfamily. As to quaternary structure, monomer.

Its subcellular location is the virion. It catalyses the reaction ATP + H2O = ADP + phosphate + H(+). Its function is as follows. NTP-dependent helicase that catalyzes unidirectional unwinding of 3'tailed duplex RNAs and plays an important role during transcription of early mRNAs, presumably by preventing R-loop formation behind the elongating RNA polymerase. Might also play a role in the export of newly synthesized mRNA chains out of the core into the cytoplasm. Required for replication and propagation of viral particles. This is RNA helicase NPH-II (NPH2) from Vertebrata (FPV).